A 310-amino-acid chain; its full sequence is MSSKPDILTIDPLVPVMKERLEKSFTLHPYTSLENLKNIAPAIRGITTGGGSGVPSEIMDALPNLEVISVNGVGTDRINLDEARRRNIGVAITQNTLTDDVADMAVALMMAVMRSIVTNDAFVRAGKWPSATAPLGRSLTRKKVGIAGFGHIGQAIAKRVSAFGMEVAYFNSHARPESTCHFEPDLKALATWCDVLILAVSGGPRSANMIDRDTLDALGKDGFLVNIARGTVVDEAALLSALQEKRIAGAGLDVFQNEPNINPAFLSLPNTVLQAHQASATVETRTTMANLVVDNLIAYFTDKTLLTPVI.

NADP(+) is bound by residues 151–152 (HI) and 227–229 (IAR). Residues R229 and E258 contribute to the active site. The active-site Proton donor is the H276.

Belongs to the D-isomer specific 2-hydroxyacid dehydrogenase family. In terms of assembly, homohexamer.

It carries out the reaction D-gluconate + NADP(+) = 2-dehydro-D-gluconate + NADPH + H(+). Catalyzes the reduction of 2-keto-D-gluconate to gluconate. Can also catalyze the reduction of 2-keto-L-gulonate. Can use both NADH and NADPH efficiently, with a slight preference for NADPH. In Gluconobacter oxydans (strain 621H) (Gluconobacter suboxydans), this protein is 2-ketogluconate reductase.